Here is a 171-residue protein sequence, read N- to C-terminus: Probable chorismate pyruvate-lyase (171 aa).

Met-36, Arg-78, Leu-116, and Glu-157 together coordinate substrate.

Belongs to the UbiC family.

It localises to the cytoplasm. It catalyses the reaction chorismate = 4-hydroxybenzoate + pyruvate. It functions in the pathway cofactor biosynthesis; ubiquinone biosynthesis. Its function is as follows. Removes the pyruvyl group from chorismate, with concomitant aromatization of the ring, to provide 4-hydroxybenzoate (4HB) for the ubiquinone pathway. This chain is Probable chorismate pyruvate-lyase, found in Bartonella henselae (strain ATCC 49882 / DSM 28221 / CCUG 30454 / Houston 1) (Rochalimaea henselae).